A 727-amino-acid polypeptide reads, in one-letter code: Fatty acid oxidation complex subunit alpha (727 aa).

Residues 1-200 form an enoyl-CoA hydratase region; that stretch reads MNDQQPFSAI…RQGLVDEAVP (200 aa). A 3-hydroxyacyl-CoA dehydrogenase region spans residues 316–727; that stretch reads KPIHYVGILG…PPTDEDDSAS (412 aa).

In the N-terminal section; belongs to the enoyl-CoA hydratase/isomerase family. It in the central section; belongs to the 3-hydroxyacyl-CoA dehydrogenase family. Heterotetramer of two alpha chains (FadJ) and two beta chains (FadI).

The protein localises to the cytoplasm. The enzyme catalyses a (3S)-3-hydroxyacyl-CoA = a (2E)-enoyl-CoA + H2O. The catalysed reaction is a 4-saturated-(3S)-3-hydroxyacyl-CoA = a (3E)-enoyl-CoA + H2O. It catalyses the reaction a (3S)-3-hydroxyacyl-CoA + NAD(+) = a 3-oxoacyl-CoA + NADH + H(+). It carries out the reaction (3S)-3-hydroxybutanoyl-CoA = (3R)-3-hydroxybutanoyl-CoA. It functions in the pathway lipid metabolism; fatty acid beta-oxidation. Its function is as follows. Catalyzes the formation of a hydroxyacyl-CoA by addition of water on enoyl-CoA. Also exhibits 3-hydroxyacyl-CoA epimerase and 3-hydroxyacyl-CoA dehydrogenase activities. In Pectobacterium carotovorum subsp. carotovorum (strain PC1), this protein is Fatty acid oxidation complex subunit alpha.